A 666-amino-acid polypeptide reads, in one-letter code: Endogenous retrovirus group K member 6 Gag polyprotein (666 aa).

Gly-2 is lipidated: N-myristoyl glycine. The disordered stretch occupies residues 165 to 264; the sequence is GKGPELVGPS…APPSRQGSKL (100 aa). Pro residues predominate over residues 232 to 247; it reads GMPPAPQGRAPYPQPP. 2 CCHC-type zinc fingers span residues 544 to 561 and 580 to 597; these read RKCY…NCPV and DLCP…QCRS. The disordered stretch occupies residues 598–642; it reads KFDKNGQPLSGNEQRGQPQAPQQTGAFPIQPFVPQGFQGQQPPLS. Over residues 604-622 the composition is skewed to polar residues; it reads QPLSGNEQRGQPQAPQQTG. Low complexity predominate over residues 624–640; sequence FPIQPFVPQGFQGQQPP.

Belongs to the beta type-B retroviral Gag protein family. HERV class-II K(HML-2) gag subfamily. In terms of processing, myristoylation is essential for retroviral assembly. Alteration of the glycine residue leads to a block in the budding of particles and an accumulation of Gag inside the cell. Specific enzymatic cleavages may yield mature proteins.

Its subcellular location is the cell membrane. Functionally, the products of the Gag polyproteins of infectious retroviruses perform highly complex orchestrated tasks during the assembly, budding, maturation, and infection stages of the viral replication cycle. During viral assembly, the proteins form membrane associations and self-associations that ultimately result in budding of an immature virion from the infected cell. Gag precursors also function during viral assembly to selectively bind and package two plus strands of genomic RNA. Endogenous Gag proteins may have kept, lost or modified their original function during evolution. The sequence is that of Endogenous retrovirus group K member 6 Gag polyprotein (ERVK-6) from Homo sapiens (Human).